The chain runs to 263 residues: Hydroxyethylthiazole kinase (263 aa).

Met-39 lines the substrate pocket. 2 residues coordinate ATP: Lys-115 and Thr-160. Gly-187 is a binding site for substrate.

It belongs to the Thz kinase family. Mg(2+) serves as cofactor.

The enzyme catalyses 5-(2-hydroxyethyl)-4-methylthiazole + ATP = 4-methyl-5-(2-phosphooxyethyl)-thiazole + ADP + H(+). It functions in the pathway cofactor biosynthesis; thiamine diphosphate biosynthesis; 4-methyl-5-(2-phosphoethyl)-thiazole from 5-(2-hydroxyethyl)-4-methylthiazole: step 1/1. In terms of biological role, catalyzes the phosphorylation of the hydroxyl group of 4-methyl-5-beta-hydroxyethylthiazole (THZ). This is Hydroxyethylthiazole kinase from Staphylococcus saprophyticus subsp. saprophyticus (strain ATCC 15305 / DSM 20229 / NCIMB 8711 / NCTC 7292 / S-41).